A 293-amino-acid polypeptide reads, in one-letter code: MIAILMGGNSAERAISLKSGEAIYQTLNNQNIDCFTFDWYGDNLSEFWQQEFDQVFIILHGRGGEDGYIQKQLENRGICYTGSDSNASHNSMDKARTKIIWEQHSLTLAPSIIANIDQPINPINFPLPWAVKPTLEGSSIGISKVDNQMQLNDALMLAWQYAPYALIEQWIKGDEYTVAILGDKALPVVRIITDQNFYDYESKYHSNKTQYLCPCNLSLTQEKALQAIALKAFFAINAKGWGRVDFIINQHNKPYLLEINTVPGMTSHSLVPMAAKAIGISFNKLVTSIINEI.

One can recognise an ATP-grasp domain in the interval 98–291 (KIIWEQHSLT…FNKLVTSIIN (194 aa)). An ATP-binding site is contributed by 124–177 (NFPLPWAVKPTLEGSSIGISKVDNQMQLNDALMLAWQYAPYALIEQWIKGDEYT). Mg(2+) contacts are provided by aspartate 245, glutamate 258, and asparagine 260.

It belongs to the D-alanine--D-alanine ligase family. It depends on Mg(2+) as a cofactor. Mn(2+) is required as a cofactor.

It is found in the cytoplasm. It carries out the reaction 2 D-alanine + ATP = D-alanyl-D-alanine + ADP + phosphate + H(+). It functions in the pathway cell wall biogenesis; peptidoglycan biosynthesis. Its function is as follows. Cell wall formation. This chain is D-alanine--D-alanine ligase, found in Vesicomyosocius okutanii subsp. Calyptogena okutanii (strain HA).